Reading from the N-terminus, the 290-residue chain is Glucuronoxylan 4-O-methyltransferase 2 (290 aa).

Residues 8–28 (FISSKLIFICCSILVLFILFL) form a helical membrane-spanning segment.

This sequence belongs to the methyltransferase superfamily. Expressed in roots, rosette leaves and stems.

Its subcellular location is the golgi apparatus membrane. The catalysed reaction is glucuronoxylan D-glucuronate + n S-adenosyl-L-methionine = glucuronoxylan 4-O-methyl-D-glucuronate + n S-adenosyl-L-homocysteine + n H(+). In terms of biological role, methyltransferase catalyzing 4-O-methylation of glucuronic acid side chains on xylan. The protein is Glucuronoxylan 4-O-methyltransferase 2 (GXM2) of Arabidopsis thaliana (Mouse-ear cress).